The chain runs to 65 residues: Large ribosomal subunit protein bL35 (65 aa).

This sequence belongs to the bacterial ribosomal protein bL35 family.

In Thermoanaerobacter pseudethanolicus (strain ATCC 33223 / 39E) (Clostridium thermohydrosulfuricum), this protein is Large ribosomal subunit protein bL35.